We begin with the raw amino-acid sequence, 436 residues long: Xylose isomerase (436 aa).

Residues aspartate 306 and aspartate 308 each coordinate Mg(2+).

It belongs to the xylose isomerase family. As to quaternary structure, homotetramer. Requires Mg(2+) as cofactor.

It localises to the cytoplasm. It carries out the reaction alpha-D-xylose = alpha-D-xylulofuranose. This Rhizobium rhizogenes (strain K84 / ATCC BAA-868) (Agrobacterium radiobacter) protein is Xylose isomerase.